The following is a 306-amino-acid chain: Recombination-associated protein RdgC (306 aa).

It belongs to the RdgC family.

Its subcellular location is the cytoplasm. It localises to the nucleoid. May be involved in recombination. In Pseudomonas aeruginosa (strain LESB58), this protein is Recombination-associated protein RdgC.